The primary structure comprises 214 residues: Adenylate kinase (214 aa).

12-17 serves as a coordination point for ATP; sequence GVGKGT. The NMP stretch occupies residues 32–61; the sequence is STGNIFRSQIASNSELGIKLKEIVESGGYV. Residues Thr-33, Arg-38, 59 to 61, 88 to 91, and Gln-95 contribute to the AMP site; these read GYV and GYPR. An LID region spans residues 126–163; the sequence is GRRICPSCNAQYHIYFKKSKLDTKCEIDQSELIQRKDD. Residue Arg-127 coordinates ATP. Zn(2+) is bound by residues Cys-130, Cys-133, Cys-150, and Asp-153. 2 residues coordinate AMP: Arg-160 and Arg-171. Lys-199 is an ATP binding site.

The protein belongs to the adenylate kinase family. As to quaternary structure, monomer.

The protein localises to the cytoplasm. It carries out the reaction AMP + ATP = 2 ADP. The protein operates within purine metabolism; AMP biosynthesis via salvage pathway; AMP from ADP: step 1/1. In terms of biological role, catalyzes the reversible transfer of the terminal phosphate group between ATP and AMP. Plays an important role in cellular energy homeostasis and in adenine nucleotide metabolism. The protein is Adenylate kinase of Mycoplasmopsis pulmonis (strain UAB CTIP) (Mycoplasma pulmonis).